The primary structure comprises 153 residues: Melatonin receptor type 1A X2.0 (153 aa).

The Cytoplasmic segment spans residues 1 to 12 (HSSWYNRLFSNS). Residues 13-33 (GTICYVGLVWVLALGAILPNL) traverse the membrane as a helical segment. Topologically, residues 34–57 (FVGSLRCDPRIFSCTFAQYVSSYY) are extracellular. The helical transmembrane segment at 58 to 78 (TIAVVIFHFFLPIGVVSYCYL) threads the bilayer. The Cytoplasmic segment spans residues 79-112 (RIWVLVLNIRHRVKPDRHLHHQTWPYNIHGFITM). The helical transmembrane segment at 113 to 133 (FVVFVLFAVCWGPLNIIGLTV) threads the bilayer. Over 134–145 (AIYPPLGDSIPQ) the chain is Extracellular. Residues 146–153 (WLFVASYF) traverse the membrane as a helical segment.

It belongs to the G-protein coupled receptor 1 family.

The protein resides in the cell membrane. Its function is as follows. High affinity receptor for melatonin. The activity of this receptor is mediated by pertussis toxin sensitive G proteins that inhibits adenylate cyclase activity. In Xenopus laevis (African clawed frog), this protein is Melatonin receptor type 1A X2.0.